A 338-amino-acid chain; its full sequence is Pyridoxal 5'-phosphate synthase subunit PdxS (338 aa).

A D-ribose 5-phosphate-binding site is contributed by Asp66. The active-site Schiff-base intermediate with D-ribose 5-phosphate is the Lys123. Gly195 provides a ligand contact to D-ribose 5-phosphate. Position 207 (Lys207) interacts with D-glyceraldehyde 3-phosphate. D-ribose 5-phosphate is bound by residues Gly256 and 277 to 278 (GS).

Belongs to the PdxS/SNZ family. As to quaternary structure, in the presence of PdxT, forms a dodecamer of heterodimers.

It catalyses the reaction aldehydo-D-ribose 5-phosphate + D-glyceraldehyde 3-phosphate + L-glutamine = pyridoxal 5'-phosphate + L-glutamate + phosphate + 3 H2O + H(+). Its pathway is cofactor biosynthesis; pyridoxal 5'-phosphate biosynthesis. In terms of biological role, catalyzes the formation of pyridoxal 5'-phosphate from ribose 5-phosphate (RBP), glyceraldehyde 3-phosphate (G3P) and ammonia. The ammonia is provided by the PdxT subunit. Can also use ribulose 5-phosphate and dihydroxyacetone phosphate as substrates, resulting from enzyme-catalyzed isomerization of RBP and G3P, respectively. This chain is Pyridoxal 5'-phosphate synthase subunit PdxS, found in Saccharolobus islandicus (strain L.S.2.15 / Lassen #1) (Sulfolobus islandicus).